A 91-amino-acid polypeptide reads, in one-letter code: RING finger protein Z (91 aa).

The N-myristoyl glycine; by host moiety is linked to residue Gly-2. The segment at 35–71 (CKCCWFQDKNLVECSDHYLCLKCISSMLKRGKNCEIC) adopts an RING-type; atypical zinc-finger fold. Residues 85-88 (PTAP) carry the PTAP/PSAP motif motif.

This sequence belongs to the arenaviridae Z protein family. Interacts with protein NP; this interaction probably directs the encapsidated genome to budding sites. Interacts (via RING domain) with polymerase L; this interaction inhibits viral transcription and replication, Z partially blocks the product exit tunnel for the releasing nascent RNA product. Interacts with the glycoprotein complex; this interaction plays a role in virion budding. Interacts with host eIF4E; this interaction results in eIF4E reduced affinity for its substrate, the 5'-m7 G cap structure. Interacts (via late-budding domain) with host TSG101; this interaction is essential for budding and release of viral particles. Interacts with host RPLP0; this interaction may serve to load ribosome-like particles inside the virion. Interacts with host PML; this interaction induces PML bodies redistribution in the cytoplasm upon viral infection. Post-translationally, myristoylation is required for the role of RING finger protein Z in assembly and budding.

It localises to the virion. The protein localises to the host cytoplasm. Its subcellular location is the host perinuclear region. It is found in the host cell membrane. Its function is as follows. Plays a crucial role in virion assembly and budding. Expressed late in the virus life cycle, it acts as an inhibitor of viral transcription and RNA synthesis by interacting with the viral polymerase L. Presumably recruits the NP encapsidated genome to cellular membranes at budding sites via direct interaction with NP. Plays critical roles in the final steps of viral release by interacting with host TSG101, a member of the vacuolar protein-sorting pathway and using other cellular host proteins involved in vesicle formation pathway. The budding of the virus progeny occurs after association of protein Z with the viral glycoprotein complex SSP-GP1-GP2 at the cell periphery, step that requires myristoylation of protein Z. Also selectively represses protein production by associating with host eIF4E. In cell-based minigenome assay, has an inhibitory effect on the ribonucleoprotein machinery (vRNP), which is responsible for the replication and transcription of the viral genome. This is RING finger protein Z from Latino mammarenavirus (isolate Rat/Bolivia/MARU 1924/1965) (LATV).